Consider the following 544-residue polypeptide: Cytochrome P450 monooxygenase tenB (544 aa).

A helical transmembrane segment spans residues 13–33 (LGYYEKVTGILGVVSIILLFW). The segment covering 438–448 (FDPFRFSRASK) has biased composition (basic and acidic residues). The segment at 438–467 (FDPFRFSRASKDDDDDDDDDGRSTSSHTKD) is disordered. Heme is bound at residue Cys-486.

It belongs to the cytochrome P450 family. Heme serves as cofactor.

The protein resides in the membrane. Its pathway is secondary metabolite biosynthesis. In terms of biological role, cytochrome P450 monooxygenase; part of the gene cluster that mediates the biosynthesis of tenellin-type 2-pyridones, iron-chelating compounds involved in iron stress tolerance, competition with the natural competitor fungus Metarhizium robertsii and insect hosts infection. TenB catalyzes the selective N-hydroxylation of the 2-pyridone nitrogen of yield tellinin and 15-hydroxytellenin (15-HT), respectively. The pathway begins with the assembly of the polyketide-amino acid backbone by the hybrid PKS-NRPS tenS with the help of the enoyl reductase tenC. These enzymes catalyze the synthesis of the pyrrolidine-2-dione intermediates pretellinin A, 11-hydropretellenin A, 12-hydropretellenin A, 13-hydropretellenin A, 14-hydropretellenin A, 12-oxopretellenin A and prototellinin D. The cytochrome P450 monooxygenase tenA then catalyzes an oxidative ring expansion of pretenellin A and 14-hydropretellenin A to form the 2-pyridone core, leading to pretenellin B and pyridovericin, respectively. The cytochrome P450 monooxygenase tenB is then required for the selective N-hydroxylation of the 2-pyridone nitrogen of yield tellinin and 15-hydroxytellenin (15-HT), respectively. The UDP-glucosyltransferase GT1 and the methyltransferase MT1, located outside the tenS gene cluster, contribute to the stepwise glycosylation and methylation of 15-HT to obtain the glycoside pyridovericin-N-O-(4-O-methyl-beta-D-glucopyranoside) (PMGP). Additional related compounds such as 1-O-methyl-15-HT, (8Z)-1-O-methyl-15-HT, and O-methyltenellin A are also produced but the enzymes involved in their biosynthesis have still to be determined. This chain is Cytochrome P450 monooxygenase tenB, found in Beauveria bassiana (strain ARSEF 2860) (White muscardine disease fungus).